Consider the following 473-residue polypeptide: Photosystem II CP43 reaction center protein (473 aa).

The propeptide occupies 1-14 (MKILYSLRRFYHVE). Threonine 15 is subject to N-acetylthreonine. Threonine 15 carries the post-translational modification Phosphothreonine. 5 helical membrane-spanning segments follow: residues 69-93 (LFEV…PHLA), 134-155 (LLGP…KDRN), 178-200 (KALY…RKIT), 255-275 (KPFA…LSYS), and 291-312 (WFNN…ASQA). Glutamate 367 serves as a coordination point for [CaMn4O5] cluster. Residues 447 to 471 (RARAAAAGFEKGIDRDLEPVLYMNP) form a helical membrane-spanning segment.

It belongs to the PsbB/PsbC family. PsbC subfamily. In terms of assembly, PSII is composed of 1 copy each of membrane proteins PsbA, PsbB, PsbC, PsbD, PsbE, PsbF, PsbH, PsbI, PsbJ, PsbK, PsbL, PsbM, PsbT, PsbX, PsbY, PsbZ, Psb30/Ycf12, at least 3 peripheral proteins of the oxygen-evolving complex and a large number of cofactors. It forms dimeric complexes. Requires Binds multiple chlorophylls and provides some of the ligands for the Ca-4Mn-5O cluster of the oxygen-evolving complex. It may also provide a ligand for a Cl- that is required for oxygen evolution. PSII binds additional chlorophylls, carotenoids and specific lipids. as cofactor.

Its subcellular location is the plastid. It localises to the chloroplast thylakoid membrane. Its function is as follows. One of the components of the core complex of photosystem II (PSII). It binds chlorophyll and helps catalyze the primary light-induced photochemical processes of PSII. PSII is a light-driven water:plastoquinone oxidoreductase, using light energy to abstract electrons from H(2)O, generating O(2) and a proton gradient subsequently used for ATP formation. This Brachypodium distachyon (Purple false brome) protein is Photosystem II CP43 reaction center protein.